Consider the following 300-residue polypeptide: tRNA-cytidine(32) 2-sulfurtransferase (300 aa).

Residues 57–62 (SGGKDS) carry the PP-loop motif motif. [4Fe-4S] cluster is bound by residues C132, C135, and C223.

The protein belongs to the TtcA family. Homodimer. Requires Mg(2+) as cofactor. It depends on [4Fe-4S] cluster as a cofactor.

It localises to the cytoplasm. It catalyses the reaction cytidine(32) in tRNA + S-sulfanyl-L-cysteinyl-[cysteine desulfurase] + AH2 + ATP = 2-thiocytidine(32) in tRNA + L-cysteinyl-[cysteine desulfurase] + A + AMP + diphosphate + H(+). Its pathway is tRNA modification. Its function is as follows. Catalyzes the ATP-dependent 2-thiolation of cytidine in position 32 of tRNA, to form 2-thiocytidine (s(2)C32). The sulfur atoms are provided by the cysteine/cysteine desulfurase (IscS) system. This Xanthomonas campestris pv. campestris (strain B100) protein is tRNA-cytidine(32) 2-sulfurtransferase.